We begin with the raw amino-acid sequence, 358 residues long: DNA polymerase IV (358 aa).

Residues 6-187 enclose the UmuC domain; that stretch reads IIHIDMDYFF…LDIGDFPGVG (182 aa). Positions 10 and 105 each coordinate Mg(2+). The active site involves E106.

It belongs to the DNA polymerase type-Y family. Monomer. Mg(2+) serves as cofactor.

It localises to the cytoplasm. It catalyses the reaction DNA(n) + a 2'-deoxyribonucleoside 5'-triphosphate = DNA(n+1) + diphosphate. Poorly processive, error-prone DNA polymerase involved in untargeted mutagenesis. Copies undamaged DNA at stalled replication forks, which arise in vivo from mismatched or misaligned primer ends. These misaligned primers can be extended by PolIV. Exhibits no 3'-5' exonuclease (proofreading) activity. May be involved in translesional synthesis, in conjunction with the beta clamp from PolIII. This Staphylococcus haemolyticus (strain JCSC1435) protein is DNA polymerase IV.